A 159-amino-acid polypeptide reads, in one-letter code: NADH dehydrogenase [ubiquinone] 1 beta subcomplex subunit 10 (159 aa).

Belongs to the complex I NDUFB10 subunit family. In terms of assembly, complex I is composed of 45 different subunits.

The protein resides in the mitochondrion inner membrane. Functionally, accessory subunit of the mitochondrial membrane respiratory chain NADH dehydrogenase (Complex I), that is believed not to be involved in catalysis. Complex I functions in the transfer of electrons from NADH to the respiratory chain. The immediate electron acceptor for the enzyme is believed to be ubiquinone. The polypeptide is NADH dehydrogenase [ubiquinone] 1 beta subcomplex subunit 10 (Bombyx mori (Silk moth)).